Reading from the N-terminus, the 231-residue chain is MNDSRIIVALDFSDQGTALNFAATLDSRLCRIKVGKELFTLAGPQLIEKLMRLGFDVFLDLKFHDIPNTVAAACSVASSLGVWMINVHALGGSKMLLAARQALDGKRTRLIAVTLLTSMNHDDLSELGISGSPEIIVQRLALLAQRCGLDGVVCSALEAASLREKAGKDFWLITPGIRSSNDNRDDQARIATPTMAIRNGASYLVIGRPITRSPDPLKALQRFNDEIVSAL.

Substrate is bound by residues D11, K33, 60 to 69 (DLKFHDIPNT), T117, R178, Q187, G207, and R208. K62 functions as the Proton donor in the catalytic mechanism.

The protein belongs to the OMP decarboxylase family. Type 1 subfamily. As to quaternary structure, homodimer.

It catalyses the reaction orotidine 5'-phosphate + H(+) = UMP + CO2. It functions in the pathway pyrimidine metabolism; UMP biosynthesis via de novo pathway; UMP from orotate: step 2/2. Its function is as follows. Catalyzes the decarboxylation of orotidine 5'-monophosphate (OMP) to uridine 5'-monophosphate (UMP). The polypeptide is Orotidine 5'-phosphate decarboxylase (Nitrosomonas eutropha (strain DSM 101675 / C91 / Nm57)).